The chain runs to 179 residues: MAKLHDYYKDEAVSQLMKQFGYHSVMQVPRVEKITLNMGVGEAIADKKLLDNAAADLTAISGQKPLITKARKSVAGFKIRQGYPIGCKVTLRGERMWEFFDRLISIAVPRIRDFRGLSAKSFDGRGNYSMGVHEQIIFPEIDYDKVDRVRGMDITITTTAKSDDEGRALLTAFNFPFRK.

Belongs to the universal ribosomal protein uL5 family. Part of the 50S ribosomal subunit; part of the 5S rRNA/L5/L18/L25 subcomplex. Contacts the 5S rRNA and the P site tRNA. Forms a bridge to the 30S subunit in the 70S ribosome.

In terms of biological role, this is one of the proteins that bind and probably mediate the attachment of the 5S RNA into the large ribosomal subunit, where it forms part of the central protuberance. In the 70S ribosome it contacts protein S13 of the 30S subunit (bridge B1b), connecting the 2 subunits; this bridge is implicated in subunit movement. Contacts the P site tRNA; the 5S rRNA and some of its associated proteins might help stabilize positioning of ribosome-bound tRNAs. This is Large ribosomal subunit protein uL5 from Sodalis glossinidius (strain morsitans).